The sequence spans 634 residues: 1-deoxy-D-xylulose-5-phosphate synthase (634 aa).

Thiamine diphosphate is bound by residues H74 and 115–117 (AHS). D146 contributes to the Mg(2+) binding site. Residues 147-148 (GA), N176, Y283, and E365 each bind thiamine diphosphate. Mg(2+) is bound at residue N176.

Belongs to the transketolase family. DXPS subfamily. In terms of assembly, homodimer. Requires Mg(2+) as cofactor. It depends on thiamine diphosphate as a cofactor.

It catalyses the reaction D-glyceraldehyde 3-phosphate + pyruvate + H(+) = 1-deoxy-D-xylulose 5-phosphate + CO2. The protein operates within metabolic intermediate biosynthesis; 1-deoxy-D-xylulose 5-phosphate biosynthesis; 1-deoxy-D-xylulose 5-phosphate from D-glyceraldehyde 3-phosphate and pyruvate: step 1/1. In terms of biological role, catalyzes the acyloin condensation reaction between C atoms 2 and 3 of pyruvate and glyceraldehyde 3-phosphate to yield 1-deoxy-D-xylulose-5-phosphate (DXP). The polypeptide is 1-deoxy-D-xylulose-5-phosphate synthase (Burkholderia cenocepacia (strain ATCC BAA-245 / DSM 16553 / LMG 16656 / NCTC 13227 / J2315 / CF5610) (Burkholderia cepacia (strain J2315))).